Reading from the N-terminus, the 485-residue chain is Sodium-coupled neutral amino acid symporter 1 (485 aa).

Residues 1–74 (MMHFKSGLEL…EYIPGTTSLG (74 aa)) lie on the Cytoplasmic side of the membrane. Serine 6 is modified (phosphoserine). Threonine 11 carries the post-translational modification Phosphothreonine. Phosphoserine occurs at positions 25, 28, 49, and 52. Phosphothreonine is present on threonine 54. Serine 56 bears the Phosphoserine mark. A helical transmembrane segment spans residues 75-97 (MSVFNLSNAIMGSGILGLAFALA). The Extracellular portion of the chain corresponds to 98-112 (NTGILLFLILLTSVT). A helical membrane pass occupies residues 113-133 (LLSIYSINLLLICSKETGCMV). The Cytoplasmic portion of the chain corresponds to 134 to 148 (YEKLGEQVFGTTGKL). Residues 149 to 169 (VIFGATSLQNTGAMLSYLFIV) form a helical membrane-spanning segment. The Extracellular segment spans residues 170–188 (KNELPSAIKSLMGEEETFS). The helical transmembrane segment at 189 to 211 (AWYVDGRVLVVMVTFGIILPLCL) threads the bilayer. Residues 212–216 (LKNLG) lie on the Cytoplasmic side of the membrane. Residues 217–237 (YLGYTSGFSLSCMVFFLIVVI) form a helical membrane-spanning segment. Residues 238-273 (YKKFQIPCMNGEQNSTVSANVTDACTPKYVTFNSKT) are Extracellular-facing. Cysteine 245 and cysteine 262 are disulfide-bonded. Asparagine 251 and asparagine 257 each carry an N-linked (GlcNAc...) asparagine glycan. The chain crosses the membrane as a helical span at residues 274 to 294 (VYALPTIAFAFVCHPSVLPIY). The Cytoplasmic portion of the chain corresponds to 295–310 (SELKDRSQKKMQMVSN). The helical transmembrane segment at 311–331 (ISFFAMFVMYFLTAIFGYLTF) threads the bilayer. Residues 332 to 348 (YEKVQSDLLHKYQSTGD) are Extracellular-facing. The helical transmembrane segment at 349-369 (ILILTVRLAVIVAVILTVPVL) threads the bilayer. Over 370 to 391 (FFTVRSSLFELAKKTKFHLCRH) the chain is Cytoplasmic. Residues 392–412 (VLVTIILLVIINLLVIFIPSM) form a helical membrane-spanning segment. Residues 413–414 (KD) are Extracellular-facing. The chain crosses the membrane as a helical span at residues 415-435 (IFGVVGVTSANMLIFILPSSL). Topologically, residues 436 to 450 (YLKITNQDGDKNTQR) are cytoplasmic. The helical transmembrane segment at 451 to 471 (IWAALFLALGVLFSLISIPLV) threads the bilayer. The Extracellular segment spans residues 472-485 (IYDWACSSSNGEGH).

It belongs to the amino acid/polyamine transporter 2 family. N-glycosylation plays an important role in the L-glutamine transport. As to expression, specifically expressed in brain with the highest levels in cerebellum and thalamus (at protein level). Expressed in glutamatergic, GABAergic and a subset of dopaminergic neurons of the substantia nigra and cholinergic motoneurons (at protein level). Also expressed by ependymal cells lining the ventricle (at protein level). Expression is also detected in spinal cord, heart, colon and placenta.

The protein localises to the cell membrane. The catalysed reaction is L-glutamine(in) + Na(+)(in) = L-glutamine(out) + Na(+)(out). The enzyme catalyses L-alanine(in) + Na(+)(in) = L-alanine(out) + Na(+)(out). It carries out the reaction L-asparagine(in) + Na(+)(in) = L-asparagine(out) + Na(+)(out). It catalyses the reaction L-histidine(in) + Na(+)(in) = L-histidine(out) + Na(+)(out). The catalysed reaction is L-serine(in) + Na(+)(in) = L-serine(out) + Na(+)(out). The enzyme catalyses L-cysteine(in) + Na(+)(in) = L-cysteine(out) + Na(+)(out). It carries out the reaction L-methionine(in) + Na(+)(in) = L-methionine(out) + Na(+)(out). It catalyses the reaction glycine(in) + Na(+)(in) = glycine(out) + Na(+)(out). The catalysed reaction is L-threonine(in) + Na(+)(in) = L-threonine(out) + Na(+)(out). The enzyme catalyses L-proline(in) + Na(+)(in) = L-proline(out) + Na(+)(out). Inhibited by alpha-(methylamino)isobutyric acid (MeAIB). Inhibited by lithium, potassium, choline ions, N-methylglucamine. The pH dependence has an allosteric effect on the transport. In terms of biological role, symporter that cotransports short-chain neutral amino acids and sodium ions from the extraccellular to the intracellular side of the cell membrane. The transport is elctrogenic, pH dependent and driven by the Na(+) electrochemical gradient. Participates in the astroglia-derived glutamine transport into GABAergic interneurons for neurotransmitter GABA de novo synthesis. May also contributes to amino acid transport in placental trophoblast. Regulates synaptic plasticity. The polypeptide is Sodium-coupled neutral amino acid symporter 1 (Rattus norvegicus (Rat)).